We begin with the raw amino-acid sequence, 347 residues long: GMP reductase (347 aa).

Residue 108–131 participates in NADP(+) binding; sequence ADFQKTKDIMALTEDLIFICIDIA. Positions 181 and 183 each coordinate K(+). Catalysis depends on Cys-186, which acts as the Thioimidate intermediate. Residue 216-239 coordinates NADP(+); the sequence is IIGDGGCSCAGDVSKAFGGGADFV.

It belongs to the IMPDH/GMPR family. GuaC type 1 subfamily. Homotetramer.

The catalysed reaction is IMP + NH4(+) + NADP(+) = GMP + NADPH + 2 H(+). Its function is as follows. Catalyzes the irreversible NADPH-dependent deamination of GMP to IMP. It functions in the conversion of nucleobase, nucleoside and nucleotide derivatives of G to A nucleotides, and in maintaining the intracellular balance of A and G nucleotides. The chain is GMP reductase from Photobacterium profundum (strain SS9).